Reading from the N-terminus, the 349-residue chain is Probable formaldehyde dehydrogenase AdhA (349 aa).

Residues C44, H66, C97, C100, C103, C111, and C161 each contribute to the Zn(2+) site.

This sequence belongs to the zinc-containing alcohol dehydrogenase family. Requires Zn(2+) as cofactor.

In terms of biological role, functions in the protection against aldehyde-stress. This chain is Probable formaldehyde dehydrogenase AdhA (adhA), found in Bacillus subtilis (strain 168).